The chain runs to 161 residues: Peptidyl-prolyl cis-trans isomerase-like 1 (161 aa).

Residues 1 to 155 (MATDVAFDTS…DEVKIIRARV (155 aa)) enclose the PPIase cyclophilin-type domain.

The protein belongs to the cyclophilin-type PPIase family. PPIL1 subfamily.

The enzyme catalyses [protein]-peptidylproline (omega=180) = [protein]-peptidylproline (omega=0). In terms of biological role, PPIases accelerate the folding of proteins. It catalyzes the cis-trans isomerization of proline imidic peptide bonds in oligopeptides. The chain is Peptidyl-prolyl cis-trans isomerase-like 1 (cyp1) from Aspergillus oryzae (strain ATCC 42149 / RIB 40) (Yellow koji mold).